A 34-amino-acid polypeptide reads, in one-letter code: Conotoxin de13a (34 aa).

4-hydroxyproline is present on residues Pro3 and Pro7. Position 14 is a 6'-bromotryptophan (Trp14). Position 18 is a 5-hydroxylysine (Lys18). Pro21 carries the post-translational modification 4-hydroxyproline. The residue at position 25 (Lys25) is a 5-hydroxylysine. His32 is subject to Histidine amide.

Post-translationally, contains 4 disulfide bonds. In terms of processing, the diastereomeric form of 5-hydroxylysine found was not conclusively established, but it is probably 5R. As to expression, expressed by the venom duct.

Its subcellular location is the secreted. The polypeptide is Conotoxin de13a (Conasprella delessertii (Sozon's cone)).